A 138-amino-acid chain; its full sequence is Putative pre-16S rRNA nuclease (138 aa).

It belongs to the YqgF nuclease family.

Its subcellular location is the cytoplasm. Could be a nuclease involved in processing of the 5'-end of pre-16S rRNA. In Listeria innocua serovar 6a (strain ATCC BAA-680 / CLIP 11262), this protein is Putative pre-16S rRNA nuclease.